Consider the following 439-residue polypeptide: High-energy light unresponsive protein 1 (439 aa).

The Cytoplasmic segment spans residues 1–67 (MPPPSSHSNI…LGLNQSIRPN (67 aa)). A helical membrane pass occupies residues 68–88 (NSLLFRIYSWLVFCLLLFTTL). Residues 89–114 (RKFNQVGVRPNGTRENLQEFFANPRS) lie on the Extracellular side of the membrane. A helical membrane pass occupies residues 115–135 (MITLCNALIMLSGLLASLQLY). At 136 to 164 (TLGAKRLKPLKILCQFSLNVRTKQAERRQ) the chain is on the cytoplasmic side. Residues 165–185 (FMINTFLAVFSGLLALTMAAT) traverse the membrane as a helical segment. Over 186–211 (YAMSKWGYILYIVGTPNLDTETIFCV) the chain is Extracellular. The chain crosses the membrane as a helical span at residues 212-232 (LLDSYALFVSRAAISALAILF). Residues 233-290 (YQHCSVIRRSIKHLINEMVPAEQDECPLPESSLQKIHDCQISYQRIFNGKAVIEEYYS) are Cytoplasmic-facing. The helical transmembrane segment at 291–311 (FVLFYSYGVCIPIFCFLMFVG) threads the bilayer. Residues 312-324 (MSAQSICWSEVVS) lie on the Extracellular side of the membrane. The helical transmembrane segment at 325 to 345 (IVIWIVNAILVLLLFSLPAFM) threads the bilayer. The Cytoplasmic portion of the chain corresponds to 346 to 402 (INEDGDRLVASSFRMYHETFHEERDLTVLSQMTFFTFQIHSTKLTLSACNYFYMDRS). Residues 403–423 (ILLSLFSAILTYFLILWEFDI) traverse the membrane as a helical segment. Residues 424–439 (KNNQSLQNIANHTIHT) lie on the Extracellular side of the membrane.

It belongs to the insect chemoreceptor superfamily. Gustatory receptor (GR) family. As to expression, expressed in the AVG and PVT neurons of the tail.

The protein localises to the cell membrane. Functionally, photoreceptor for short wavelength (UV) light that mediates UV-light-induced avoidance behavior. Directly senses and absorbs both UV-A and UV-B light with very high efficiency. Absorption of UV-B but not UV-A light shows resistance to photobleaching. In contrast to other photoreceptors, does not use a prosthetic chromophore to capture photons and only depends on its protein conformation. Might have a role in response to white light exposure. The sequence is that of High-energy light unresponsive protein 1 from Caenorhabditis elegans.